The sequence spans 641 residues: ATP-dependent zinc metalloprotease FtsH (641 aa).

Over 1 to 16 (MNKQQKPKRSPLRPDY) the chain is Cytoplasmic. A helical transmembrane segment spans residues 17–37 (LVIVIIILLAIGMYFFFTEMM). The Extracellular portion of the chain corresponds to 38–131 (APKVKQFDEF…VSFVPHVSVD (94 aa)). Residues 132–152 (FWNIISTLLLIAAPIVLVVIM) form a helical membrane-spanning segment. The Cytoplasmic segment spans residues 153–641 (FRSMSSQSNK…EVEEDSKKSE (489 aa)). 222-229 (GQPGTGKT) provides a ligand contact to ATP. H444 is a binding site for Zn(2+). E445 is a catalytic residue. 2 residues coordinate Zn(2+): H448 and D520.

In the central section; belongs to the AAA ATPase family. This sequence in the C-terminal section; belongs to the peptidase M41 family. As to quaternary structure, homohexamer. The cofactor is Zn(2+).

It is found in the cell membrane. Functionally, acts as a processive, ATP-dependent zinc metallopeptidase for both cytoplasmic and membrane proteins. Plays a role in the quality control of integral membrane proteins. The polypeptide is ATP-dependent zinc metalloprotease FtsH (Acholeplasma laidlawii (strain PG-8A)).